The following is a 562-amino-acid chain: Arginine--tRNA ligase (562 aa).

Residues 129 to 139 carry the 'HIGH' region motif; it reads ANPTGPLHVGH.

The protein belongs to the class-I aminoacyl-tRNA synthetase family. As to quaternary structure, monomer.

The protein resides in the cytoplasm. It carries out the reaction tRNA(Arg) + L-arginine + ATP = L-arginyl-tRNA(Arg) + AMP + diphosphate. The sequence is that of Arginine--tRNA ligase from Stenotrophomonas maltophilia (strain K279a).